Reading from the N-terminus, the 90-residue chain is Small ribosomal subunit protein uS15 (90 aa).

This sequence belongs to the universal ribosomal protein uS15 family. Part of the 30S ribosomal subunit. Forms a bridge to the 50S subunit in the 70S ribosome, contacting the 23S rRNA.

Its function is as follows. One of the primary rRNA binding proteins, it binds directly to 16S rRNA where it helps nucleate assembly of the platform of the 30S subunit by binding and bridging several RNA helices of the 16S rRNA. Forms an intersubunit bridge (bridge B4) with the 23S rRNA of the 50S subunit in the ribosome. The protein is Small ribosomal subunit protein uS15 of Helicobacter pylori (strain HPAG1).